Consider the following 70-residue polypeptide: Conotoxin TsMLKM-011 (70 aa).

The signal sequence occupies residues 1–24; it reads MLKMGVVLFVFLVLFPLATLQLDA. A propeptide spanning residues 25–54 is cleaved from the precursor; the sequence is DQPVERYAENKQLVSPYERRQIILHALGQR. 3 disulfides stabilise this stretch: Cys-56–Cys-66, Cys-57–Cys-68, and Cys-62–Cys-69.

Belongs to the conotoxin M superfamily. Expressed by the venom duct.

It localises to the secreted. The polypeptide is Conotoxin TsMLKM-011 (Conus tessulatus (Tessellate cone)).